The following is a 167-amino-acid chain: Mitochondrial fission 1 protein B (167 aa).

One copy of the TPR repeat lies at 92–125 (REKLYLLALGYYRSGDFSRSRDCIERCLEVEPES). A helical membrane pass occupies residues 144-164 (VIGVGIAVTAVGVVAGIAAAI).

This sequence belongs to the FIS1 family. In terms of assembly, interacts with PEX11A, PEX11B, PEX11C, PEX11D and PEX11E.

It localises to the mitochondrion outer membrane. The protein resides in the peroxisome membrane. In terms of biological role, component of the peroxisomal and mitochondrial division machineries. Plays a role in promoting the fission of mitochondria and peroxisomes. In association with PEX11C, PEX11D, PEX11E and DRP3A, is involved in cell cycle-associated constitutive self-replication of preexisting peroxisomes. In Arabidopsis thaliana (Mouse-ear cress), this protein is Mitochondrial fission 1 protein B (FIS1B).